Here is a 467-residue protein sequence, read N- to C-terminus: MDTAGIRLTPKEIVSKLNEYIVGQNDAKRKVAIALRNRYRRSLLDEESKQEISPKNILMIGPTGVGKTEIARRMAKVVGAPFIKVEATKFTEVGYVGRDVESMVRDLVDVSVRLVKAQKKSLVQDEATAKANEKLVKLLVPSMKKKASQTNNPLESLFGGAIPNFGQNNEDEEEPPTEEIKTKRSEIKRQLEEGKLEKEKVRIKVEQDPGALGMLGTNQNQQMQEMMNQLMPKKKVEREVAVETARKILADSYADELIDQESANQEALELAEQMGIIFIDEIDKVATNNHNSGQDVSRQGVQRDILPILEGSVIQTKYGTVNTEHMLFIGAGAFHVSKPSDLIPELQGRFPLRVELDSLSVEDFVRILTEPKLSLIKQYEALLQTEEVTVNFTDEAITRLAEIAYQVNQDTDNIGARRLHTILEKMLEDLSFEAPSMPNAVVDITPQYVDDKLKSISTNKDLSAFIL.

ATP contacts are provided by residues valine 22 and 64 to 69 (GVGKTE). Positions 149–192 (QTNNPLESLFGGAIPNFGQNNEDEEEPPTEEIKTKRSEIKRQLE) are disordered. A compositionally biased stretch (basic and acidic residues) spans 178–192 (EEIKTKRSEIKRQLE). ATP-binding residues include aspartate 280, glutamate 345, and arginine 417.

Belongs to the ClpX chaperone family. HslU subfamily. In terms of assembly, a double ring-shaped homohexamer of HslV is capped on each side by a ring-shaped HslU homohexamer. The assembly of the HslU/HslV complex is dependent on binding of ATP.

It localises to the cytoplasm. ATPase subunit of a proteasome-like degradation complex; this subunit has chaperone activity. The binding of ATP and its subsequent hydrolysis by HslU are essential for unfolding of protein substrates subsequently hydrolyzed by HslV. HslU recognizes the N-terminal part of its protein substrates and unfolds these before they are guided to HslV for hydrolysis. In Staphylococcus aureus (strain bovine RF122 / ET3-1), this protein is ATP-dependent protease ATPase subunit HslU.